We begin with the raw amino-acid sequence, 383 residues long: Deoxyguanosinetriphosphate triphosphohydrolase-like protein (383 aa).

The 137-residue stretch at 62–198 (RLTHSLEVST…ASLADDISYI (137 aa)) folds into the HD domain.

Belongs to the dGTPase family. Type 2 subfamily.

The polypeptide is Deoxyguanosinetriphosphate triphosphohydrolase-like protein (Rickettsia prowazekii (strain Madrid E)).